Reading from the N-terminus, the 233-residue chain is Probable F-box protein At3g56670 (233 aa).

Positions 22 to 69 (HGGVIDIPLNTDSGVTKNTPGEIALLRFKSVSKLWSSIISSRRDFIES) constitute an F-box domain.

The protein is Probable F-box protein At3g56670 of Arabidopsis thaliana (Mouse-ear cress).